Reading from the N-terminus, the 187-residue chain is Protein ECM23 (187 aa).

2 disordered regions span residues 106–127 (GKKS…LPNG) and 167–187 (KKIR…FKNK). The segment at 126–180 (NGQPKECATCGDTWTSQWRSGPNGNVELCSRCGIAYRKKMEKKIRSQQSSDDGTK) adopts a GATA-type zinc-finger fold.

In terms of biological role, involved in morphogenesis. May be involved in cell wall organization and biogenesis. This is Protein ECM23 (ECM23) from Saccharomyces cerevisiae (strain ATCC 204508 / S288c) (Baker's yeast).